A 105-amino-acid chain; its full sequence is MNEFFSVEPNYYLVLAAVLFTIGAAGVLVRRNAIVLFMCVELMLNAANLTLVTFSRINGDLNGQIMAFFVMVVAAAEVVVGLAIIMAIYRTRRSASVDDANLLKY.

3 helical membrane passes run 9-29, 34-54, and 65-85; these read PNYYLVLAAVLFTIGAAGVLV, IVLFMCVELMLNAANLTLVTF, and IMAFFVMVVAAAEVVVGLAII.

This sequence belongs to the complex I subunit 4L family. As to quaternary structure, NDH-1 is composed of 14 different subunits. Subunits NuoA, H, J, K, L, M, N constitute the membrane sector of the complex.

It is found in the cell membrane. The enzyme catalyses a quinone + NADH + 5 H(+)(in) = a quinol + NAD(+) + 4 H(+)(out). NDH-1 shuttles electrons from NADH, via FMN and iron-sulfur (Fe-S) centers, to quinones in the respiratory chain. The immediate electron acceptor for the enzyme in this species is believed to be a menaquinone. Couples the redox reaction to proton translocation (for every two electrons transferred, four hydrogen ions are translocated across the cytoplasmic membrane), and thus conserves the redox energy in a proton gradient. In Salinispora tropica (strain ATCC BAA-916 / DSM 44818 / JCM 13857 / NBRC 105044 / CNB-440), this protein is NADH-quinone oxidoreductase subunit K.